Here is a 515-residue protein sequence, read N- to C-terminus: 1-pyrroline-5-carboxylate dehydrogenase 2 (515 aa).

Residues E286 and C320 contribute to the active site.

Belongs to the aldehyde dehydrogenase family. RocA subfamily.

It carries out the reaction L-glutamate 5-semialdehyde + NAD(+) + H2O = L-glutamate + NADH + 2 H(+). It participates in amino-acid degradation; L-proline degradation into L-glutamate; L-glutamate from L-proline: step 2/2. The chain is 1-pyrroline-5-carboxylate dehydrogenase 2 (rocA2) from Halalkalibacterium halodurans (strain ATCC BAA-125 / DSM 18197 / FERM 7344 / JCM 9153 / C-125) (Bacillus halodurans).